Here is a 287-residue protein sequence, read N- to C-terminus: ATP synthase gamma chain (287 aa).

This sequence belongs to the ATPase gamma chain family. As to quaternary structure, F-type ATPases have 2 components, CF(1) - the catalytic core - and CF(0) - the membrane proton channel. CF(1) has five subunits: alpha(3), beta(3), gamma(1), delta(1), epsilon(1). CF(0) has three main subunits: a, b and c.

It is found in the cell membrane. Functionally, produces ATP from ADP in the presence of a proton gradient across the membrane. The gamma chain is believed to be important in regulating ATPase activity and the flow of protons through the CF(0) complex. The sequence is that of ATP synthase gamma chain from Bacillus velezensis (strain DSM 23117 / BGSC 10A6 / LMG 26770 / FZB42) (Bacillus amyloliquefaciens subsp. plantarum).